The sequence spans 125 residues: Small ribosomal subunit protein uS12 (125 aa).

The disordered stretch occupies residues 9–31 (RQGREVEKIKSKSPAMENSPQRR). Residue D89 is modified to 3-methylthioaspartic acid. The disordered stretch occupies residues 106–125 (GVKDRKQSRSKYGAKRPKKA). Residues 113–125 (SRSKYGAKRPKKA) are compositionally biased toward basic residues.

Belongs to the universal ribosomal protein uS12 family. As to quaternary structure, part of the 30S ribosomal subunit. Contacts proteins S8 and S17. May interact with IF1 in the 30S initiation complex.

With S4 and S5 plays an important role in translational accuracy. In terms of biological role, interacts with and stabilizes bases of the 16S rRNA that are involved in tRNA selection in the A site and with the mRNA backbone. Located at the interface of the 30S and 50S subunits, it traverses the body of the 30S subunit contacting proteins on the other side and probably holding the rRNA structure together. The combined cluster of proteins S8, S12 and S17 appears to hold together the shoulder and platform of the 30S subunit. The chain is Small ribosomal subunit protein uS12 from Polaromonas sp. (strain JS666 / ATCC BAA-500).